We begin with the raw amino-acid sequence, 120 residues long: Holo-[acyl-carrier-protein] synthase (120 aa).

Mg(2+)-binding residues include aspartate 8 and glutamate 58.

This sequence belongs to the P-Pant transferase superfamily. AcpS family. It depends on Mg(2+) as a cofactor.

It localises to the cytoplasm. It carries out the reaction apo-[ACP] + CoA = holo-[ACP] + adenosine 3',5'-bisphosphate + H(+). Transfers the 4'-phosphopantetheine moiety from coenzyme A to a Ser of acyl-carrier-protein. The polypeptide is Holo-[acyl-carrier-protein] synthase (Streptococcus sanguinis (strain SK36)).